Consider the following 204-residue polypeptide: Bombinin-like peptides 1 (204 aa).

The segment at residues 1–16 (MNFKYIVAVSILIASA) is a signal peptide (or 18). 2 positions are modified to asparagine amide: Asn70 and Asn133.

It belongs to the bombinin family. Expressed by the skin glands.

It is found in the secreted. Functionally, has antimicrobial activity, but no hemolytic activity. Preference on killing Gram-negative non-enteric bacteria. The protein is Bombinin-like peptides 1 of Bombina orientalis (Oriental fire-bellied toad).